The primary structure comprises 683 residues: DNA ligase (683 aa).

NAD(+)-binding positions include 42–46 (DAEYD), 91–92 (SL), and Glu-122. Residue Lys-124 is the N6-AMP-lysine intermediate of the active site. The NAD(+) site is built by Arg-145, Glu-182, Lys-299, and Lys-323. The Zn(2+) site is built by Cys-417, Cys-420, Cys-435, and Cys-441. The region spanning 602-683 (APQGVLAGKT…MRKLLEGQTT (82 aa)) is the BRCT domain.

Belongs to the NAD-dependent DNA ligase family. LigA subfamily. The cofactor is Mg(2+). It depends on Mn(2+) as a cofactor.

It catalyses the reaction NAD(+) + (deoxyribonucleotide)n-3'-hydroxyl + 5'-phospho-(deoxyribonucleotide)m = (deoxyribonucleotide)n+m + AMP + beta-nicotinamide D-nucleotide.. DNA ligase that catalyzes the formation of phosphodiester linkages between 5'-phosphoryl and 3'-hydroxyl groups in double-stranded DNA using NAD as a coenzyme and as the energy source for the reaction. It is essential for DNA replication and repair of damaged DNA. The sequence is that of DNA ligase from Paraburkholderia phymatum (strain DSM 17167 / CIP 108236 / LMG 21445 / STM815) (Burkholderia phymatum).